A 385-amino-acid chain; its full sequence is MNNLILVKYASEIFLKGLNKNKFERKLKENIRKKLKDIDHEFITDQNRWFIKSEDLDGVIERVKKVFGVKELCLVTQVTGDFDSIKEEGLKKIKESKAKSFKVETNRANKKFPMNSMEVSRAVGGYILSELGDEIEVDIHNPECKLYVEIRGNAYVFTDKDKIKAVGGLPYGMNGSTMVMLSGGIDSPVAAYLMARRGVETHCVYYHSHPYTSERAKDKVKELAKIVGRYTEKITLYVVPFTEIQMDIIEKCREDELTIIMRRFMMRVACELSEKKKIQSITTGESIGQVASQTMEGLIVSNDASDRPVFRPLIAMDKEDIMDIARDIDTYETSILPYEDCCTIFVPKHPKTKPRVKDMIIAERKLDIEALVNKAIDEMETFIFE.

One can recognise a THUMP domain in the interval 57–160 (DGVIERVKKV…RGNAYVFTDK (104 aa)). ATP contacts are provided by residues 180–181 (ML), 205–206 (YY), Arg-262, Gly-284, and Gln-293.

The protein belongs to the ThiI family.

It localises to the cytoplasm. The enzyme catalyses [ThiI sulfur-carrier protein]-S-sulfanyl-L-cysteine + a uridine in tRNA + 2 reduced [2Fe-2S]-[ferredoxin] + ATP + H(+) = [ThiI sulfur-carrier protein]-L-cysteine + a 4-thiouridine in tRNA + 2 oxidized [2Fe-2S]-[ferredoxin] + AMP + diphosphate. The catalysed reaction is [ThiS sulfur-carrier protein]-C-terminal Gly-Gly-AMP + S-sulfanyl-L-cysteinyl-[cysteine desulfurase] + AH2 = [ThiS sulfur-carrier protein]-C-terminal-Gly-aminoethanethioate + L-cysteinyl-[cysteine desulfurase] + A + AMP + 2 H(+). Its pathway is cofactor biosynthesis; thiamine diphosphate biosynthesis. In terms of biological role, catalyzes the ATP-dependent transfer of a sulfur to tRNA to produce 4-thiouridine in position 8 of tRNAs, which functions as a near-UV photosensor. Also catalyzes the transfer of sulfur to the sulfur carrier protein ThiS, forming ThiS-thiocarboxylate. This is a step in the synthesis of thiazole, in the thiamine biosynthesis pathway. The sulfur is donated as persulfide by IscS. This is Probable tRNA sulfurtransferase from Clostridium perfringens (strain 13 / Type A).